Consider the following 609-residue polypeptide: Threonine--tRNA ligase (609 aa).

Positions 1-145 (MRLLLIHSDY…TIVPGAGAAV (145 aa)) are editing domain. A catalytic region spans residues 194–485 (IHVDLMRSKE…TANQSVPQLP (292 aa)). Residues C286, H338, and H458 each coordinate Zn(2+).

This sequence belongs to the class-II aminoacyl-tRNA synthetase family. In terms of assembly, homodimer. Zn(2+) is required as a cofactor.

The protein resides in the cytoplasm. The enzyme catalyses tRNA(Thr) + L-threonine + ATP = L-threonyl-tRNA(Thr) + AMP + diphosphate + H(+). Functionally, catalyzes the attachment of threonine to tRNA(Thr) in a two-step reaction: L-threonine is first activated by ATP to form Thr-AMP and then transferred to the acceptor end of tRNA(Thr). Also edits incorrectly charged L-seryl-tRNA(Thr). This Methanosphaerula palustris (strain ATCC BAA-1556 / DSM 19958 / E1-9c) protein is Threonine--tRNA ligase.